Reading from the N-terminus, the 290-residue chain is Pyridoxal 5'-phosphate synthase subunit PdxS (290 aa).

Position 22 (D22) interacts with D-ribose 5-phosphate. K79 serves as the catalytic Schiff-base intermediate with D-ribose 5-phosphate. G151 lines the D-ribose 5-phosphate pocket. A D-glyceraldehyde 3-phosphate-binding site is contributed by R163. D-ribose 5-phosphate contacts are provided by residues G212 and 233 to 234 (GS).

This sequence belongs to the PdxS/SNZ family. As to quaternary structure, in the presence of PdxT, forms a dodecamer of heterodimers.

The enzyme catalyses aldehydo-D-ribose 5-phosphate + D-glyceraldehyde 3-phosphate + L-glutamine = pyridoxal 5'-phosphate + L-glutamate + phosphate + 3 H2O + H(+). It participates in cofactor biosynthesis; pyridoxal 5'-phosphate biosynthesis. In terms of biological role, catalyzes the formation of pyridoxal 5'-phosphate from ribose 5-phosphate (RBP), glyceraldehyde 3-phosphate (G3P) and ammonia. The ammonia is provided by the PdxT subunit. Can also use ribulose 5-phosphate and dihydroxyacetone phosphate as substrates, resulting from enzyme-catalyzed isomerization of RBP and G3P, respectively. The chain is Pyridoxal 5'-phosphate synthase subunit PdxS from Clostridium botulinum (strain Loch Maree / Type A3).